The following is a 657-amino-acid chain: Glycogen debranching enzyme (657 aa).

Residue Asp336 is the Nucleophile of the active site. The active-site Proton donor is the Glu371. A disordered region spans residues 460 to 479 (ANGEENRDGTNNNYSNNHGK).

The protein belongs to the glycosyl hydrolase 13 family.

The catalysed reaction is Hydrolysis of (1-&gt;6)-alpha-D-glucosidic linkages to branches with degrees of polymerization of three or four glucose residues in limit dextrin.. Its pathway is glycan degradation; glycogen degradation. In terms of biological role, removes maltotriose and maltotetraose chains that are attached by 1,6-alpha-linkage to the limit dextrin main chain, generating a debranched limit dextrin. This is Glycogen debranching enzyme from Escherichia coli O9:H4 (strain HS).